The chain runs to 303 residues: UDP-3-O-acyl-N-acetylglucosamine deacetylase (303 aa).

Residues histidine 78, histidine 237, and aspartate 241 each contribute to the Zn(2+) site. Histidine 264 functions as the Proton donor in the catalytic mechanism.

The protein belongs to the LpxC family. It depends on Zn(2+) as a cofactor.

The catalysed reaction is a UDP-3-O-[(3R)-3-hydroxyacyl]-N-acetyl-alpha-D-glucosamine + H2O = a UDP-3-O-[(3R)-3-hydroxyacyl]-alpha-D-glucosamine + acetate. It participates in glycolipid biosynthesis; lipid IV(A) biosynthesis; lipid IV(A) from (3R)-3-hydroxytetradecanoyl-[acyl-carrier-protein] and UDP-N-acetyl-alpha-D-glucosamine: step 2/6. Catalyzes the hydrolysis of UDP-3-O-myristoyl-N-acetylglucosamine to form UDP-3-O-myristoylglucosamine and acetate, the committed step in lipid A biosynthesis. This is UDP-3-O-acyl-N-acetylglucosamine deacetylase from Chromohalobacter salexigens (strain ATCC BAA-138 / DSM 3043 / CIP 106854 / NCIMB 13768 / 1H11).